We begin with the raw amino-acid sequence, 596 residues long: Arginine--tRNA ligase (596 aa).

Positions 135–145 (ANPTGPIHIGG) match the 'HIGH' region motif. The disordered stretch occupies residues 227 to 249 (PRVDGGADQDGNPLGEGDSEQRE).

This sequence belongs to the class-I aminoacyl-tRNA synthetase family. As to quaternary structure, monomer.

It is found in the cytoplasm. The enzyme catalyses tRNA(Arg) + L-arginine + ATP = L-arginyl-tRNA(Arg) + AMP + diphosphate. In Bifidobacterium adolescentis (strain ATCC 15703 / DSM 20083 / NCTC 11814 / E194a), this protein is Arginine--tRNA ligase.